The primary structure comprises 398 residues: Alpha-monoglucosyldiacylglycerol synthase (398 aa).

It belongs to the glycosyltransferase group 1 family. Glycosyltransferase 4 subfamily. Requires Mg(2+) as cofactor.

The protein resides in the cell membrane. The enzyme catalyses a 1,2-diacyl-sn-glycerol + UDP-alpha-D-glucose = a 1,2-diacyl-3-O-(alpha-D-glucopyranosyl)-sn-glycerol + UDP + H(+). Activated by the negatively charged lipids phosphatidylglycerol (PG), cardiolipin (CL), dodecylphosphate-rac-glycerol (PDG), 1,2-dioleoyl-phosphatidylglycerol (DOPG) and phosphatidylserine (PS). Its function is as follows. Glucosyltransferase involved in the biosynthesis of the non-bilayer-prone membrane lipid alpha-monoglucosyldiacylglycerol. This is a major component for maintaining a certain anionic lipid surface charge density, for balancing the bilayer to non-bilayer phase equilibria and for keeping a constant lipid bilayer spontaneous curvature (curvature packing stress). Catalyzes the transfer of a glucosyl residue from UDP-Glc to diacylglycerol (DAG) acceptor to form the corresponding alpha-glucosyl-DAG (1,2-diacyl-3-O-(alpha-D-glucopyranosyl)-sn-glycerol). It can only use UDP-Glc as sugar donor and DAG is the preferred substrate. This Acholeplasma laidlawii protein is Alpha-monoglucosyldiacylglycerol synthase (mgs).